We begin with the raw amino-acid sequence, 44 residues long: Antibacterial protein 2 homolog (44 aa).

This sequence belongs to the staphylococcal hemolytic protein family.

It localises to the secreted. Its function is as follows. Has hemolytic activity and also inhibits the growth of gonococci. The sequence is that of Antibacterial protein 2 homolog from Staphylococcus haemolyticus (strain JCSC1435).